The primary structure comprises 230 residues: Heptaprenylglyceryl phosphate synthase (230 aa).

Lys-12 lines the sn-glycerol 1-phosphate pocket. Mg(2+)-binding residues include Asp-14 and Ser-40. Residues 159–164 (YLEYSG), Gly-189, and 209–210 (GN) each bind sn-glycerol 1-phosphate.

It belongs to the GGGP/HepGP synthase family. Group I subfamily. As to quaternary structure, homodimer. It depends on Mg(2+) as a cofactor.

It catalyses the reaction sn-glycerol 1-phosphate + all-trans-heptaprenyl diphosphate = 3-heptaprenyl-sn-glycero-1-phosphate + diphosphate. It functions in the pathway membrane lipid metabolism; glycerophospholipid metabolism. Its function is as follows. Prenyltransferase that catalyzes in vivo the transfer of the heptaprenyl moiety of heptaprenyl pyrophosphate (HepPP; 35 carbon atoms) to the C3 hydroxyl of sn-glycerol-1-phosphate (G1P), producing heptaprenylglyceryl phosphate (HepGP). This reaction is an ether-bond-formation step in the biosynthesis of archaea-type G1P-based membrane lipids found in Bacillales. In Bacillus pumilus (strain SAFR-032), this protein is Heptaprenylglyceryl phosphate synthase.